The following is a 360-amino-acid chain: Peptide chain release factor 1 (360 aa).

Glutamine 235 carries the post-translational modification N5-methylglutamine. The disordered stretch occupies residues 284–313; sequence AKRQQAEASTRRNLLGSGDRSDRNRTYNFP.

It belongs to the prokaryotic/mitochondrial release factor family. Post-translationally, methylated by PrmC. Methylation increases the termination efficiency of RF1.

The protein resides in the cytoplasm. Functionally, peptide chain release factor 1 directs the termination of translation in response to the peptide chain termination codons UAG and UAA. This Escherichia coli O127:H6 (strain E2348/69 / EPEC) protein is Peptide chain release factor 1.